Here is an 81-residue protein sequence, read N- to C-terminus: Small ribosomal subunit protein bS18 (81 aa).

It belongs to the bacterial ribosomal protein bS18 family. Part of the 30S ribosomal subunit. Forms a tight heterodimer with protein bS6.

Its function is as follows. Binds as a heterodimer with protein bS6 to the central domain of the 16S rRNA, where it helps stabilize the platform of the 30S subunit. The chain is Small ribosomal subunit protein bS18 from Leptospira borgpetersenii serovar Hardjo-bovis (strain JB197).